A 236-amino-acid polypeptide reads, in one-letter code: Ribose-5-phosphate isomerase A (236 aa).

Substrate is bound by residues 31-34 (TGST), 84-87 (DGAD), and 97-100 (KGGG). E106 (proton acceptor) is an active-site residue. A substrate-binding site is contributed by K124.

It belongs to the ribose 5-phosphate isomerase family. As to quaternary structure, homodimer.

It carries out the reaction aldehydo-D-ribose 5-phosphate = D-ribulose 5-phosphate. The protein operates within carbohydrate degradation; pentose phosphate pathway; D-ribose 5-phosphate from D-ribulose 5-phosphate (non-oxidative stage): step 1/1. Catalyzes the reversible conversion of ribose-5-phosphate to ribulose 5-phosphate. The sequence is that of Ribose-5-phosphate isomerase A from Polynucleobacter necessarius subsp. necessarius (strain STIR1).